Reading from the N-terminus, the 199-residue chain is N-(5'-phosphoribosyl)anthranilate isomerase (199 aa).

Belongs to the TrpF family.

The enzyme catalyses N-(5-phospho-beta-D-ribosyl)anthranilate = 1-(2-carboxyphenylamino)-1-deoxy-D-ribulose 5-phosphate. It participates in amino-acid biosynthesis; L-tryptophan biosynthesis; L-tryptophan from chorismate: step 3/5. The polypeptide is N-(5'-phosphoribosyl)anthranilate isomerase (Solibacter usitatus (strain Ellin6076)).